The following is a 291-amino-acid chain: 5'-3' exonuclease (291 aa).

The region spanning 176–269 (TPKQVIEYKG…VHAALKPIDK (94 aa)) is the 5'-3' exonuclease domain.

In terms of biological role, 5'-3' exonuclease acting preferentially on double-stranded DNA. The polypeptide is 5'-3' exonuclease (polA) (Mycoplasma pneumoniae (strain ATCC 29342 / M129 / Subtype 1) (Mycoplasmoides pneumoniae)).